Here is a 401-residue protein sequence, read N- to C-terminus: UPF0283 membrane protein SO_1811 (401 aa).

The interval 1-22 is disordered; it reads MSVELLPHSTEPHANGADKSVS. 3 helical membrane-spanning segments follow: residues 99-119, 129-149, and 239-259; these read LARL…VLGL, LFSF…VGVI, and ESAV…IILW.

It belongs to the UPF0283 family.

The protein localises to the cell inner membrane. This is UPF0283 membrane protein SO_1811 from Shewanella oneidensis (strain ATCC 700550 / JCM 31522 / CIP 106686 / LMG 19005 / NCIMB 14063 / MR-1).